A 356-amino-acid chain; its full sequence is sn-glycerol-3-phosphate import ATP-binding protein UgpC (356 aa).

Residues 4–235 (LKLQAVTKSW…PASLFVASFI (232 aa)) enclose the ABC transporter domain. An ATP-binding site is contributed by 37-44 (GPSGCGKS).

Belongs to the ABC transporter superfamily. sn-glycerol-3-phosphate importer (TC 3.A.1.1.3) family. In terms of assembly, the complex is composed of two ATP-binding proteins (UgpC), two transmembrane proteins (UgpA and UgpE) and a solute-binding protein (UgpB).

The protein resides in the cell inner membrane. It catalyses the reaction sn-glycerol 3-phosphate(out) + ATP + H2O = sn-glycerol 3-phosphate(in) + ADP + phosphate + H(+). Its function is as follows. Part of the ABC transporter complex UgpBAEC involved in sn-glycerol-3-phosphate (G3P) import. Responsible for energy coupling to the transport system. The sequence is that of sn-glycerol-3-phosphate import ATP-binding protein UgpC from Escherichia coli O6:K15:H31 (strain 536 / UPEC).